The sequence spans 3295 residues: Toxin CdiA (3295 aa).

Residues 33-366 (PSSGVGHTQR…GKGNTQLTTA (334 aa)) are two-partner system transport domain (TPS). A helical membrane pass occupies residues 55–75 (LLIALGCISLSAQAAIVADGS). Positions 353–1574 (GVLYGKGNTQ…LLVYAKTLTN (1222 aa)) are FHA-1. Residues 1165 to 1185 (PPSSIPPSSTQSSSTQASASP) are disordered. Residues 1575 to 1796 (RRQILTATTD…LKTDKGDYAP (222 aa)) are receptor binding domain (RBD). A YP domain region spans residues 1797 to 1977 (GPEAALSLAN…GVKPGDLRAN (181 aa)). The interval 1806–1831 (NISPPSSLDATGPRGVPPPSDDLNRT) is disordered. The periplasmic FHA-1 repeat (pFR) stretch occupies residues 1998–2035 (GAISASNNLQISMAKDITLNNRCGLLQAGNHLQLSTLN). Positions 2022–2676 (LLQAGNHLQL…DRDNYDAKQS (655 aa)) are FHA-2. Disordered stretches follow at residues 2260–2292 (TSQTEQHDEQRNHTGTKKGLLSSTTTRSEEGRS) and 2823–2847 (QQNVDDLSRDTGNANGSIGPIFDKE). Residues 2823–2838 (QQNVDDLSRDTGNANG) are compositionally biased toward polar residues. The short motif at 3073-3076 (VENN) is the VENN CT cleavage motif element. The segment at 3073–3295 (VENNLLGGNE…QKKDAMEDSK (223 aa)) is CT domain. Positions 3276 to 3295 (SSEFGSSLIQQKKDAMEDSK) are disordered. The span at 3286-3295 (QKKDAMEDSK) shows a compositional bias: basic and acidic residues.

This sequence in the N-terminal section; belongs to the CdiA toxin family. Probably interacts with cognate immunity protein CdiI.

The protein resides in the membrane. It is found in the target cell. Its subcellular location is the target cell cytoplasm. In terms of biological role, toxic component of a toxin-immunity protein module, which functions as a cellular contact-dependent growth inhibition (CDI) system. CDI modules allow bacteria to communicate with and inhibit the growth of closely related neighboring bacteria in a contact-dependent fashion. CDI is neutralized by its cognate immunity protein CdiI, but not by non-cognate CdiI from other bacteria. Its function is as follows. The CdiA protein is thought to be exported from the cell through the central lumen of CdiB, the other half of its two-partner system (TPS). The TPS domain probably remains associated with CdiB while the FHA-1 domain forms an extended filament with the receptor-binding domain (RBD) at its extremity; in the secretion arrested state the C-terminus of the RBD and YP domains form a hairpin-like structure as the FHA-2, PT and CT domains are periplasmic. The YP domain is probably responsible for this arrest at the point where it re-enters the host cell periplasm. Upon binding to a target cell outer membrane receptor a signal is transmitted to activate secretion. The filament elongates slightly, the rest of CdiA is secreted and the FHA-2 domain becomes stably associated with the target cell's outer membrane where it facilitates entry of the toxic CT domain into the target cell periplasm. From there the toxic CT domain is cleaved and gains access to the target cell cytoplasm via an inner membrane protein. In Yersinia pestis, this protein is Toxin CdiA.